The primary structure comprises 235 residues: Ribosomal RNA small subunit methyltransferase G (235 aa).

Residues G74, F79, 97–99 (EAT), 125–126 (AE), and R144 contribute to the S-adenosyl-L-methionine site.

This sequence belongs to the methyltransferase superfamily. RNA methyltransferase RsmG family.

The protein resides in the cytoplasm. Functionally, specifically methylates the N7 position of a guanine in 16S rRNA. In Dehalococcoides mccartyi (strain CBDB1), this protein is Ribosomal RNA small subunit methyltransferase G.